Reading from the N-terminus, the 257-residue chain is Pantothenate synthetase (257 aa).

Position 29 to 36 (29 to 36 (MGNLHAGH)) interacts with ATP. The active-site Proton donor is the His-36. Residue Gln-60 participates in (R)-pantoate binding. A beta-alanine-binding site is contributed by Gln-60. 145-148 (GEKD) is an ATP binding site. Gln-151 lines the (R)-pantoate pocket. ATP contacts are provided by residues Val-174 and 182–185 (LSSR).

The protein belongs to the pantothenate synthetase family. In terms of assembly, homodimer.

It localises to the cytoplasm. The enzyme catalyses (R)-pantoate + beta-alanine + ATP = (R)-pantothenate + AMP + diphosphate + H(+). It participates in cofactor biosynthesis; (R)-pantothenate biosynthesis; (R)-pantothenate from (R)-pantoate and beta-alanine: step 1/1. Its function is as follows. Catalyzes the condensation of pantoate with beta-alanine in an ATP-dependent reaction via a pantoyl-adenylate intermediate. The polypeptide is Pantothenate synthetase (Coxiella burnetii (strain Dugway 5J108-111)).